Reading from the N-terminus, the 102-residue chain is CRISPR-associated endoribonuclease Cas2 (102 aa).

Asp-8 lines the Mg(2+) pocket.

Belongs to the CRISPR-associated endoribonuclease Cas2 protein family. Homodimer, forms a heterotetramer with a Cas1 homodimer. Mg(2+) serves as cofactor.

CRISPR (clustered regularly interspaced short palindromic repeat), is an adaptive immune system that provides protection against mobile genetic elements (viruses, transposable elements and conjugative plasmids). CRISPR clusters contain sequences complementary to antecedent mobile elements and target invading nucleic acids. CRISPR clusters are transcribed and processed into CRISPR RNA (crRNA). Functions as a ssRNA-specific endoribonuclease. Involved in the integration of spacer DNA into the CRISPR cassette. The polypeptide is CRISPR-associated endoribonuclease Cas2 (Acidovorax ebreus (strain TPSY) (Diaphorobacter sp. (strain TPSY))).